The primary structure comprises 288 residues: uncharacterized protein (288 aa).

This is an uncharacterized protein from Methanocaldococcus jannaschii (strain ATCC 43067 / DSM 2661 / JAL-1 / JCM 10045 / NBRC 100440) (Methanococcus jannaschii).